A 226-amino-acid chain; its full sequence is Late protein I226R (226 aa).

The N-terminal stretch at 1-16 is a signal peptide; that stretch reads MKMETFLVCLFHNADG. N-linked (GlcNAc...) asparagine; by host glycosylation is found at N142 and N164.

This sequence belongs to the asfivirus I226R family.

Functionally, plays a role in the inhibition of host NF-kappa-B and IRF3 signaling pathways. Mechanistically, promotes the degradation of host IKBKG through enhancing its ubiquitination leading to inhibition of both pathways. This is Late protein I226R from African swine fever virus (isolate Tick/South Africa/Pretoriuskop Pr4/1996) (ASFV).